The following is a 238-amino-acid chain: CD209 antigen-like protein A (238 aa).

Over 1-51 (MSDSKEMGKRQLRPLDEELLTSSHTRHSIKGFGFQTNSGFSSFTGCLVHSQ) the chain is Cytoplasmic. The chain crosses the membrane as a helical; Signal-anchor for type II membrane protein span at residues 52-72 (VPLALQVLFLAVCSVLLVVIL). The Extracellular portion of the chain corresponds to 73–238 (VKVYKIPSSQ…KKLSTSCPSK (166 aa)). Cys-108 and Cys-119 are oxidised to a cystine. Residues 115-229 (FQGSCYFFSV…CTNKKFWICK (115 aa)) enclose the C-type lectin domain. A glycan (N-linked (GlcNAc...) asparagine) is linked at Asn-130. Intrachain disulfides connect Cys-136–Cys-228 and Cys-207–Cys-220. Ca(2+)-binding residues include Glu-198, Asn-200, Leu-202, Glu-205, Asn-216, and Asp-217. Asn-216 carries an N-linked (GlcNAc...) asparagine glycan.

As to expression, predominantly expressed in dendritic cells. Detected at very low levels in lung, spleen, lymph nodes and bone marrow.

The protein localises to the membrane. Probable pathogen-recognition receptor. May mediate the endocytosis of pathogens which are subsequently degraded in lysosomal compartments. May recognize in a calcium-dependent manner high mannose N-linked oligosaccharides in a variety of pathogen antigens. The sequence is that of CD209 antigen-like protein A (Cd209a) from Mus musculus (Mouse).